The chain runs to 89 residues: MKDSYISIVIAYLMVTFILVSSMPIEGEKGELGPHRLPCPPEYANYCFNGKCVHVVAQDEPGKPCYSCICDKFYIGKRCGTLDLTNPDF.

A signal peptide spans 1 to 30 (MKDSYISIVIAYLMVTFILVSSMPIEGEKG). 3 disulfide bridges follow: Cys-39–Cys-52, Cys-47–Cys-68, and Cys-70–Cys-79. The EGF-like domain occupies 43-80 (YANYCFNGKCVHVVAQDEPGKPCYSCICDKFYIGKRCG).

It belongs to the EGF domain peptide family. In terms of tissue distribution, expressed by the venom gland.

It is found in the secreted. Ant peptide with probable defensive activity which acts as a potent agonist of the mammalian epidermal growth factor receptor (EGFR). Mimics, both structurally and functionally, vertebrate epidermal growth factor (EGF) peptide hormones. In vivo, intraplantar injection in mice causes long-lasting (several days) hypersensitivity of the injected paw to both mechanical and thermal stimuli. Its long-lasting effect is unusual for venom toxins whose effects are usually immediate. One possible explanation is that it would reduce the duration of a nest attack, discourage future attacks, or enhance the actions of subsequent exposure to other pain-inducing venom peptides. This chain is OMEGA-ectatommitoxin(02)-Rm1a, found in Rhytidoponera metallica (Australian green-headed ant).